Here is a 689-residue protein sequence, read N- to C-terminus: MSGRNNNKLPTNLPQLQNLIKRDPTSYREEFLQQYKHYLSVIEIFKLQPDKPNKELSTLVMFMAQTAHCFPQYLEDFPEQLKSLLRVHHTVMDPDQRMTLCKALILLRNKNLISPSVLLELFFELLRCQDKLLRKTLYTHIVTDIKNINAKHKNNKVNTTLQNFMYTMVRDNNAIAAKISLDVMIELYRRNIWNDAKTVNVISTSCFSKVTKILVAALKFFLGKDEEEKKDSDSESEDEGPTARDLMVRYSTGKKNTKNKKKLEKAMKVLKKHKKKKRPEVFNFSAIHLVHDPQEFAEKLLKQLEASKERFEVKLMHMDLISRLVGIHELFLFNFYPFVQRFLQPHQREVTKILLYAAQATHHLVPPEISQSVLRTIANNFVTDRNSGEVMTVGINAIKELTARCPLAMTEELLQDLALYKTHKDKNVSMSARSLIQLFRSLNPEMLQKKFRGKPTEASKEARIHAYGELDAKDYIPGAEVLEVEQEKTEEPEEDDGWESASLSDDDEDGEWIDVHHSSDEEQQEVADKIQAMPAEERKAKAATVSASRLLSQEDFKKIRLAQLAKEMNNAPGKSVKRKNIEIDSDEEERSGELLSLRDIEHLHKKPKSDKETRLATVMAGRTDRKEFVRKKSKMNPHASSTNKEKKKNKNFMMMRYSQNIRSKNKRSFRDKQIALRDSLLKKRKRLMK.

The stretch at 254 to 319 (KKNTKNKKKL…RFEVKLMHMD (66 aa)) forms a coiled coil. 2 disordered regions span residues 485–512 (EQEKTEEPEEDDGWESASLSDDDEDGEW) and 606–689 (KPKS…RLMK). Positions 668–681 (SFRDKQIALRDSLL) are enriched in basic and acidic residues.

This sequence belongs to the SDA1 family.

It localises to the nucleus. It is found in the nucleolus. Its function is as follows. Required for 60S pre-ribosomal subunits export to the cytoplasm. The chain is Protein SDA1 homolog (sdad1) from Xenopus tropicalis (Western clawed frog).